Here is a 433-residue protein sequence, read N- to C-terminus: MLFEQGQLTLELPECTMQKAAYYENPGLFGGYGYSKATDTYGYSTPHQPYPPPAAANSLDSDYPSSACSIQSSAPLRAPAHKGAELNGSCMRPGTGNSQGGGGGNQPPGLNSEQQPPQPPPPPPPTLPPSSPTNPGSGVPAKKTKGGLSASSSSSTISKQIFPWMKESRQNSKQKNSCATSGENCEDKSPPGPASKRVRTAYTSAQLVELEKEFHFNRYLCRPRRVEMANLLNLTERQIKIWFQNRRMKYKKDQKAKGILHSPAGQSPERSPPLGGAAGHVAYSGQLPPVPGLAYDAPSPPAFAKSQPNMYGLAAYTAPLSSCLPQQKRYPAPEFEPHPMASNGGGFASANLQGSPVYVGGNFVDSMAPTSGPVFNLGHLSHPSSASVDYSCAAQIPGNHHHGPCDPHPTYTDLSAHHSSQGRLPEAPKLTHL.

3 disordered regions span residues 44 to 198 (STPH…SKRV), 258 to 280 (GILHSPAGQSPERSPPLGGAAGH), and 401 to 433 (HHGPCDPHPTYTDLSAHHSSQGRLPEAPKLTHL). Residues 58–74 (SLDSDYPSSACSIQSSA) are compositionally biased toward polar residues. The segment covering 97–106 (NSQGGGGGNQ) has biased composition (gly residues). The segment covering 116–132 (PPQPPPPPPPTLPPSSP) has biased composition (pro residues). A compositionally biased stretch (low complexity) spans 146-159 (GGLSASSSSSTISK). Positions 161 to 166 (IFPWMK) match the Antp-type hexapeptide motif. Over residues 171-183 (NSKQKNSCATSGE) the composition is skewed to polar residues. The homeobox DNA-binding region spans 195-254 (SKRVRTAYTSAQLVELEKEFHFNRYLCRPRRVEMANLLNLTERQIKIWFQNRRMKYKKDQ).

Belongs to the Antp homeobox family. In terms of tissue distribution, detected in adult kidney, but not in other adult tissues tested.

Its subcellular location is the nucleus. Functionally, sequence-specific transcription factor which is part of a developmental regulatory system that provides cells with specific positional identities on the anterior-posterior axis. In Mus musculus (Mouse), this protein is Homeobox protein Hox-D3 (Hoxd3).